Here is a 412-residue protein sequence, read N- to C-terminus: Multifunctional CCA protein (412 aa).

ATP contacts are provided by Gly8 and Arg11. 2 residues coordinate CTP: Gly8 and Arg11. Mg(2+) is bound by residues Glu21 and Asp23. Arg91, Arg137, and Arg140 together coordinate ATP. 3 residues coordinate CTP: Arg91, Arg137, and Arg140. Residues 228 to 329 (TGIHTLMTLA…LKLFNAIDVW (102 aa)) form the HD domain.

The protein belongs to the tRNA nucleotidyltransferase/poly(A) polymerase family. Bacterial CCA-adding enzyme type 1 subfamily. In terms of assembly, monomer. Can also form homodimers and oligomers. Mg(2+) is required as a cofactor. It depends on Ni(2+) as a cofactor.

The enzyme catalyses a tRNA precursor + 2 CTP + ATP = a tRNA with a 3' CCA end + 3 diphosphate. The catalysed reaction is a tRNA with a 3' CCA end + 2 CTP + ATP = a tRNA with a 3' CCACCA end + 3 diphosphate. Its function is as follows. Catalyzes the addition and repair of the essential 3'-terminal CCA sequence in tRNAs without using a nucleic acid template. Adds these three nucleotides in the order of C, C, and A to the tRNA nucleotide-73, using CTP and ATP as substrates and producing inorganic pyrophosphate. tRNA 3'-terminal CCA addition is required both for tRNA processing and repair. Also involved in tRNA surveillance by mediating tandem CCA addition to generate a CCACCA at the 3' terminus of unstable tRNAs. While stable tRNAs receive only 3'-terminal CCA, unstable tRNAs are marked with CCACCA and rapidly degraded. This Yersinia pestis protein is Multifunctional CCA protein.